Here is a 503-residue protein sequence, read N- to C-terminus: EZH inhibitory protein (503 aa).

The span at 1–16 shows a compositional bias: basic and acidic residues; that stretch reads MATQSDMEKEQKHQQD. Disordered regions lie at residues 1–72, 97–462, and 483–503; these read MATQ…AAAA, HSDR…RSIS, and VPPE…PPEP. A compositionally biased stretch (low complexity) spans 41–72; it reads PAASVTTVSSQASPSGGAALSSSTAGSSAAAA. Positions 97 to 107 are enriched in basic and acidic residues; that stretch reads HSDRQDCRSPH. The span at 184–197 shows a compositional bias: polar residues; it reads YPCSGASTSSQATQ. Position 259 is a phosphoserine (Ser-259). Positions 345–366 are enriched in low complexity; that stretch reads LRSRSTQQRSALLSRRSLSGSA. Residues 401–409 form a sufficient for interaction with EZH2 region; it reads WHAVRMRAS. Residues 403-423 are necessary and sufficient for inhibition of PRC2/EED-EZH1 and PRC2/EED-EZH2 complex activity; that stretch reads AVRMRASSPSPPGRFFLPIPQ. A compositionally biased stretch (low complexity) spans 428–453; the sequence is SSSSSYASNSSSPSRSPGLSPSSPSP.

As to quaternary structure, interacts with PRC2/EED-EZH1 complex member EZH1 and with PRC2/EED-EZH2 complex member EZH2; the interaction blocks EZH1/EZH2 methyltransferase activity. Interacts (via C-terminus) with SUZ12 which is a member of the PRC2/EED-EZH1 and PRC2/EED-EZH2 complexes. In testis, detected in male germ cells inside the seminiferous tubules, especially in spermatogonia and round spermatids (at protein level). In the ovary, expressed in primordial follicles and oocytes but not the external follicle cells (at protein level).

It is found in the nucleus. It localises to the cytoplasm. Its function is as follows. Inhibits PRC2/EED-EZH1 and PRC2/EED-EZH2 complex function by inhibiting EZH1/EZH2 methyltransferase activity, thereby causing down-regulation of histone H3 trimethylation on 'Lys-27' (H3K27me3). Probably inhibits methyltransferase activity by limiting the stimulatory effect of cofactors such as AEBP2 and JARID2. Inhibits H3K27me3 deposition during spermatogenesis and oogenesis. The sequence is that of EZH inhibitory protein from Homo sapiens (Human).